The chain runs to 218 residues: MNCRSEVLEVSVEGRQVEEAMLAVLHTVLLHRSTGKFHYKKEGTYSIGTVGTQDVDCDFIDFTYVRVSSEELDRALRKVVGEFRDALRNSGGDGLGQMSLEFYQKKKSRWPFSDECIPWEVWTVKVHVVALATEQERQICREKVGEKLCEKIINIVEVMNRHEYLPKMPTQSEVDNVFDTGLRDVQPYLYKISFQITDALGSSVTTTMRRLIKDTLAL.

Residues 152-156 are important for interaction with ATG13; the sequence is IINIV.

The protein belongs to the ATG101 family. As to quaternary structure, interacts with ATG13. Associates with a complex composed of ATG13, ULK1 and RB1CC1; the association with this complex requires the presence of ATG13.

Its subcellular location is the cytoplasm. The protein localises to the preautophagosomal structure. Its function is as follows. Autophagy factor required for autophagosome formation. Stabilizes ATG13, protecting it from proteasomal degradation. The chain is Autophagy-related protein 101 (ATG101) from Bos taurus (Bovine).